The following is a 156-amino-acid chain: Cytochrome c-type biogenesis protein CcmE 1 (156 aa).

Residues 1–8 (MNATRKQR) lie on the Cytoplasmic side of the membrane. A helical; Signal-anchor for type II membrane protein transmembrane segment spans residues 9 to 29 (LWLVIGVLAAAALAVTLIVFA). Over 30–156 (LQRNMSYLFT…ATVAPLTAPR (127 aa)) the chain is Periplasmic. His123 and Tyr127 together coordinate heme.

Belongs to the CcmE/CycJ family.

Its subcellular location is the cell inner membrane. Heme chaperone required for the biogenesis of c-type cytochromes. Transiently binds heme delivered by CcmC and transfers the heme to apo-cytochromes in a process facilitated by CcmF and CcmH. This chain is Cytochrome c-type biogenesis protein CcmE 1, found in Xanthomonas axonopodis pv. citri (strain 306).